Here is an 88-residue protein sequence, read N- to C-terminus: Apolipoprotein C-I (88 aa).

The signal sequence occupies residues 1–26; the sequence is MRLILSLPVLAVVLAMVLEGPAPAQA.

This sequence belongs to the apolipoprotein C1 family.

It is found in the secreted. Functionally, inhibitor of lipoprotein binding to the low density lipoprotein (LDL) receptor, LDL receptor-related protein, and very low density lipoprotein (VLDL) receptor. Associates with high density lipoproteins (HDL) and the triacylglycerol-rich lipoproteins in the plasma and makes up about 10% of the protein of the VLDL and 2% of that of HDL. Appears to interfere directly with fatty acid uptake and is also the major plasma inhibitor of cholesteryl ester transfer protein (CETP). Binds free fatty acids and reduces their intracellular esterification. Modulates the interaction of APOE with beta-migrating VLDL and inhibits binding of beta-VLDL to the LDL receptor-related protein. The sequence is that of Apolipoprotein C-I (APOC1) from Cynopterus brachyotis (Lesser short-nosed fruit bat).